We begin with the raw amino-acid sequence, 293 residues long: MSKFGVLVMGPAGAGKSTFCSALIQHLQTTRRSCFYVNLDPAAESFNYEPDLDIRELITLEDVMEEMELGPNGGLIYCFEFLLQNLDFLSQALDPLSEEYLIIFDMPGQIELYTHIPLLPSLVQYLSRQGPLNINLCAAYLLESTFVIDKAKFFAGTLSAMSAMLMLEMPHVNILSKMDQVRDMVSRKELKRFVNVDVNLLQDEIGGAEEPVEGDPSSKDTLLSGRSFKRLNRAVGQLIDDFSMVSFLKLDVQDEDSVAAVLSHIDDAIQFHEAQEPREPNDEQDVDYEDADI.

13 to 18 (GAGKST) contributes to the GTP binding site. The Gly-Pro-Asn (GPN)-loop; involved in dimer interface signature appears at 70–72 (GPN). 176–179 (SKMD) is a binding site for GTP. Residues 272-281 (HEAQEPREPN) are compositionally biased toward basic and acidic residues. The interval 272 to 293 (HEAQEPREPNDEQDVDYEDADI) is disordered. Acidic residues predominate over residues 282–293 (DEQDVDYEDADI).

This sequence belongs to the GPN-loop GTPase family. As to quaternary structure, heterodimers with gpn1 or gpn2. Binds to RNA polymerase II (RNAPII).

Its function is as follows. Small GTPase required for proper nuclear import of RNA polymerase II and III (RNAPII and RNAPIII). May act at an RNAP assembly step prior to nuclear import. The protein is GPN-loop GTPase 3 of Aspergillus fumigatus (strain ATCC MYA-4609 / CBS 101355 / FGSC A1100 / Af293) (Neosartorya fumigata).